We begin with the raw amino-acid sequence, 416 residues long: UDP-N-acetylmuramoylalanine--D-glutamate ligase (416 aa).

104 to 110 (GSNGKST) is an ATP binding site.

The protein belongs to the MurCDEF family.

The protein localises to the cytoplasm. The catalysed reaction is UDP-N-acetyl-alpha-D-muramoyl-L-alanine + D-glutamate + ATP = UDP-N-acetyl-alpha-D-muramoyl-L-alanyl-D-glutamate + ADP + phosphate + H(+). Its pathway is cell wall biogenesis; peptidoglycan biosynthesis. Its function is as follows. Cell wall formation. Catalyzes the addition of glutamate to the nucleotide precursor UDP-N-acetylmuramoyl-L-alanine (UMA). The protein is UDP-N-acetylmuramoylalanine--D-glutamate ligase of Francisella tularensis subsp. tularensis (strain WY96-3418).